The following is a 1872-amino-acid chain: Plexin-A3 (1872 aa).

Positions 1–19 (MHTVCLLPLLFFTIGGCLG) are cleaved as a signal peptide. The Sema domain occupies 20–489 (SSRPFRTFVV…SEKQVSQLPV (470 aa)). The Extracellular segment spans residues 20–1220 (SSRPFRTFVV…ITADRALTLP (1201 aa)). An N-linked (GlcNAc...) asparagine glycan is attached at Asn-60. 9 disulfides stabilise this stretch: Cys-78/Cys-87, Cys-113/Cys-121, Cys-267/Cys-388, Cys-283/Cys-339, Cys-357/Cys-376, Cys-492/Cys-509, Cys-498/Cys-540, Cys-501/Cys-518, and Cys-512/Cys-524. N-linked (GlcNAc...) asparagine glycosylation is present at Asn-549. A disulfide bridge links Cys-575 with Cys-595. 4 IPT/TIG domains span residues 841 to 934 (PRIT…YSFV), 936 to 1021 (PTLD…YTYT), 1024 to 1123 (PTVT…FTYY), and 1126 to 1212 (PSFE…LHIT). A glycan (N-linked (GlcNAc...) asparagine) is linked at Asn-1163. The chain crosses the membrane as a helical span at residues 1221 to 1241 (AMVGLAAGGGLLLLAITVVLV). Positions 1240–1294 (LVAYKRKTQDADRTLKRLQLQMDNLESRVALECKEAFAELQTDINELTNHMDGVQ) form a coiled coil. Over 1242-1872 (AYKRKTQDAD…QIITLVSSSS (631 aa)) the chain is Cytoplasmic. Residue Ser-1597 is modified to Phosphoserine.

The protein belongs to the plexin family.

It is found in the cell membrane. Coreceptor for SEMA3A and SEMA3F. Necessary for signaling by class 3 semaphorins and subsequent remodeling of the cytoskeleton. Plays a role in axon guidance in the developing nervous system. Regulates the migration of sympathetic neurons, but not of neural crest precursors. Required for normal dendrite spine morphology in pyramidal neurons. May play a role in regulating semaphorin-mediated programmed cell death in the developing nervous system. Class 3 semaphorins bind to a complex composed of a neuropilin and a plexin. The plexin modulates the affinity of the complex for specific semaphorins, and its cytoplasmic domain is required for the activation of down-stream signaling events in the cytoplasm. This Rattus norvegicus (Rat) protein is Plexin-A3 (Plxna3).